The following is a 527-amino-acid chain: Protein Lilipod (527 aa).

The Extracellular portion of the chain corresponds to 1–22; the sequence is MDEEEEEEVTDLKLQLFHNTVR. The chain crosses the membrane as a helical span at residues 23-43; it reads EHIIFLLLIILLYSSSYVVVS. The Cytoplasmic segment spans residues 44–65; sequence RFRRRDRDDLYSNDEDEVLVYR. Residues 66–86 form a helical membrane-spanning segment; the sequence is ISFWLCTFTLAVAEGAAMLLP. The Extracellular segment spans residues 87–117; that stretch reads VSIASNEVLLLYPNSYYVKWLNSSLIQGLWN. The helical transmembrane segment at 118–138 threads the bilayer; sequence HVFLFSNLSLFIFLPFVYLFS. At 139–160 the chain is on the cytoplasmic side; the sequence is ESTGFVGNKKGILPRVYETFTV. The chain crosses the membrane as a helical span at residues 161–181; the sequence is FMLMAIIVLVLTAVLSAVFGI. Residues 182-194 lie on the Extracellular side of the membrane; that stretch reads EKLQFFWFLNLGS. Residues 195–215 form a helical membrane-spanning segment; it reads VHLPFLYSCVSFLGVMLMLIC. The Cytoplasmic segment spans residues 216–341; it reads TPYGFVRLFG…LRTSSTFQRT (126 aa). The helical transmembrane segment at 342-362 threads the bilayer; that stretch reads FVYPLAMLLLLFCTAVTILLV. Residues 363 to 395 lie on the Extracellular side of the membrane; that stretch reads VQNTLELLIGIKALPLSTRQFALGISSLSKLGP. The chain crosses the membrane as a helical span at residues 396–416; the sequence is FGAGLEVCLIFYLGATSVVGF. At 417–433 the chain is on the cytoplasmic side; the sequence is YSMPFMRKVCPKRRQTS. A helical transmembrane segment spans residues 434–454; the sequence is LPQLMLNCGFMLVLSSALPLL. At 455-468 the chain is on the extracellular side; that stretch reads SRIIGITNFDLLGD. Residues 469–489 form a helical membrane-spanning segment; sequence FGAIEWLGNFQIVLLYNLVFG. Topologically, residues 490–527 are cytoplasmic; that stretch reads TTTALCLANKFTATVRRELRARLVENYVLFTNYISFIN.

It belongs to the LIMR family. As to expression, in the ovary, detected in germline stem cells and their progeny. Also detected in the somatic follicular epithelium.

It localises to the cell membrane. Required during oogenesis to promote self-renewal of germline stem cells, probably by enhancing BMP signaling activity. This is Protein Lilipod from Drosophila melanogaster (Fruit fly).